The primary structure comprises 256 residues: Thiazole synthase (256 aa).

Lys98 serves as the catalytic Schiff-base intermediate with DXP. 1-deoxy-D-xylulose 5-phosphate contacts are provided by residues Gly159, 185–186 (AG), and 207–208 (NT).

Belongs to the ThiG family. Homotetramer. Forms heterodimers with either ThiH or ThiS.

Its subcellular location is the cytoplasm. The catalysed reaction is [ThiS sulfur-carrier protein]-C-terminal-Gly-aminoethanethioate + 2-iminoacetate + 1-deoxy-D-xylulose 5-phosphate = [ThiS sulfur-carrier protein]-C-terminal Gly-Gly + 2-[(2R,5Z)-2-carboxy-4-methylthiazol-5(2H)-ylidene]ethyl phosphate + 2 H2O + H(+). It functions in the pathway cofactor biosynthesis; thiamine diphosphate biosynthesis. Catalyzes the rearrangement of 1-deoxy-D-xylulose 5-phosphate (DXP) to produce the thiazole phosphate moiety of thiamine. Sulfur is provided by the thiocarboxylate moiety of the carrier protein ThiS. In vitro, sulfur can be provided by H(2)S. In Syntrophobacter fumaroxidans (strain DSM 10017 / MPOB), this protein is Thiazole synthase.